Reading from the N-terminus, the 435-residue chain is Zinc finger and BTB domain-containing protein 25 (435 aa).

The 107-residue stretch at 1–107 (MDTASHSLVL…GIRFLHADYL (107 aa)) folds into the BTB domain. Glycyl lysine isopeptide (Lys-Gly) (interchain with G-Cter in SUMO2) cross-links involve residues Lys-142, Lys-148, Lys-198, and Lys-204. The segment at 238-260 (HLCHYCGERFDSRSNLRQHLHTH) adopts a C2H2-type 1 zinc-finger fold. Glycyl lysine isopeptide (Lys-Gly) (interchain with G-Cter in SUMO2) cross-links involve residues Lys-303 and Lys-330. A C2H2-type 2 zinc finger spans residues 349-371 (MSCTICGHKFPRKSQLLEHMYTH). A Glycyl lysine isopeptide (Lys-Gly) (interchain with G-Cter in SUMO2) cross-link involves residue Lys-405.

In terms of tissue distribution, expressed mainly in hematopoietic cells and testis.

The protein resides in the nucleus. Its function is as follows. May be involved in transcriptional regulation. The protein is Zinc finger and BTB domain-containing protein 25 (ZBTB25) of Homo sapiens (Human).